The sequence spans 2769 residues: Teneurin-4 (2769 aa).

Positions 1–22 are enriched in basic and acidic residues; the sequence is MDVKERKPYRSLTRRRDAERRY. The disordered stretch occupies residues 1–45; sequence MDVKERKPYRSLTRRRDAERRYTSSSADSEEGKAPQKSYSSSETL. Residues 1–341 enclose the Teneurin N-terminal domain; it reads MDVKERKPYR…KPSKYCNWKC (341 aa). Topologically, residues 1–345 are cytoplasmic; the sequence is MDVKERKPYR…YCNWKCAALS (345 aa). A Phosphoserine modification is found at Ser124. The disordered stretch occupies residues 130 to 233; sequence RLWGRSTRSG…PPAGGAQEPA (104 aa). Residues 134-155 show a composition bias toward low complexity; sequence RSTRSGRSSCLSSRANSNLTLT. A compositionally biased stretch (basic and acidic residues) spans 156–166; it reads DTEHENTETDH. The residue at position 178 (Thr178) is a Phosphothreonine. Residues 187 to 211 are compositionally biased toward polar residues; sequence HTPNQHHAASINSLNRGNFTPRSNP. Residues 346–366 traverse the membrane as a helical segment; the sequence is AIVISATLVILLAYFVAMHLF. The Extracellular segment spans residues 367 to 2769; the sequence is GLNWHLQPME…FMRQSEMGRR (2403 aa). Residues 400-426 form a disordered region; that stretch reads PSGGTGLETPDRKGKGTTEGKPSSFFP. Residues 408 to 417 are compositionally biased toward basic and acidic residues; the sequence is TPDRKGKGTT. Asn467 is a glycosylation site (N-linked (GlcNAc...) asparagine). The disordered stretch occupies residues 507 to 526; the sequence is ARSLEGTPRQSRGTVPPSSH. The segment covering 514 to 526 has biased composition (polar residues); the sequence is PRQSRGTVPPSSH. 8 consecutive EGF-like domains span residues 562 to 593, 594 to 624, 626 to 658, 659 to 690, 692 to 725, 726 to 757, 758 to 787, and 788 to 831; these read SVDNCPSNCYGNGDCISGTCHCFLGFLGPDCG, RASCPVLCSGNGQYMKGRCLCHSGWKGAECD, PTNQCIDVACSNHGTCITGTCICNPGYKGESCE, EVDCMDPTCSGRGVCVRGECHCSVGWGGTNCE, PRATCLDQCSGHGTFLPDTGLCSCDPSWTGHDCS, IEICAADCGGHGVCVGGTCRCEDGWMGAACDQ, RACHPRCAEHGTCRDGKCECSPGWNGEHCT, and IAHY…AGCD. Cystine bridges form between Cys566–Cys576, Cys570–Cys581, Cys583–Cys592, Cys601–Cys612, Cys614–Cys623, Cys630–Cys641, Cys635–Cys646, Cys648–Cys657, Cys662–Cys673, Cys667–Cys678, Cys680–Cys689, Cys700–Cys713, Cys715–Cys724, Cys729–Cys739, Cys733–Cys744, Cys746–Cys755, Cys760–Cys770, Cys764–Cys775, Cys777–Cys786, Cys800–Cys810, Cys804–Cys819, and Cys821–Cys830. 2 N-linked (GlcNAc...) asparagine glycosylation sites follow: Asn940 and Asn1259. 5 NHL repeats span residues 1216–1259, 1264–1308, 1334–1378, 1393–1444, and 1523–1566; these read SCPS…PSGN, LELR…IKST, TRCG…NGII, LSCD…VAGR, and CFSG…IRKN. A YD 1 repeat occupies 1576–1595; that stretch reads YELSSPIDQELYLFDTTGKH. Residue Asn1609 is glycosylated (N-linked (GlcNAc...) asparagine). YD repeat units follow at residues 1612–1632, 1675–1694, and 1695–1717; these read YTGDGDITLITDNNGNMVNVR, YHGNSGLLATKSNENGWTTF, and YEYDSFGRLTNVTFPTGQVSSFR. Asn1705, Asn1741, Asn1799, and Asn1884 each carry an N-linked (GlcNAc...) asparagine glycan. YD repeat units follow at residues 1887-1906, 1928-1946, 1947-1967, 1974-1991, 1992-2013, 2014-2031, 2034-2054, 2057-2077, 2085-2104, 2110-2127, 2128-2154, 2156-2169, 2170-2193, 2196-2216, 2217-2237, 2239-2259, 2271-2291, and 2293-2313; these read YSPGGYIAGIQRGIMSERME, YLEKSMVLLLHSQRQYIFE, FDKNDRLSSVTMPNVARQTLE, YYRNIYQPPEGNASVIQD, FTEDGHLLHTFYLGTGRRVIYK, YGKLSKLAETLYDTTKVS, YDETAGMLKTINLQNEGFTCT, YRQIGPLIDRQIFRFTEEGMV, YDNSFRVTSMQAVINETPLP, YDDVSGKTEQFGKFGVIY, YDINQIITTAVMTHTKHFDAYGRMKEV, YEIFRSLMYWMTVQ, YDNMGRVVKKELKVGPYANTTRYS, YDADGQLQTVSINDKPLWRYS, YDLNGNLHLLSPGNSARLTPL, YDIRDRITRLGDVQYKMDEDG, YNSAGLLIKAYNRAGSWSVRY, and YDGLGRRVSSKSSHSHHLQFF. Asn1985 is a glycosylation site (N-linked (GlcNAc...) asparagine). Asn2188 carries an N-linked (GlcNAc...) asparagine glycan. A glycan (N-linked (GlcNAc...) asparagine) is linked at Asn2328. A YD 23 repeat occupies 2339–2380; that stretch reads YDLQGHLFAMELSSGDEFYIACDNIGTPLAVFSGTGLMIKQI. Asn2646 is a glycosylation site (N-linked (GlcNAc...) asparagine).

The protein belongs to the tenascin family. Teneurin subfamily. In terms of assembly, homodimer; disulfide-linked. May also form heterodimer with either TENM1 or TENM2 or TENM3.

It is found in the cell membrane. The protein localises to the cell projection. It localises to the nucleus. The protein resides in the cytoplasm. Its function is as follows. Involved in neural development, regulating the establishment of proper connectivity within the nervous system. Plays a role in the establishment of the anterior-posterior axis during gastrulation. Regulates the differentiation and cellular process formation of oligodendrocytes and myelination of small-diameter axons in the central nervous system (CNS). Promotes activation of focal adhesion kinase. May function as a cellular signal transducer. The protein is Teneurin-4 (TENM4) of Homo sapiens (Human).